The chain runs to 176 residues: Woronin body major protein (176 aa).

A propeptide spanning residues 1–16 is cleaved from the precursor; the sequence is MGYYDDDAHGHVEADA. The segment covering 1–16 has biased composition (basic and acidic residues); sequence MGYYDDDAHGHVEADA. Residues 1 to 31 are disordered; the sequence is MGYYDDDAHGHVEADAAPRATTGTGTGSASQ. Positions 174 to 176 match the Microbody targeting signal motif; the sequence is SRL.

The protein belongs to the eIF-5A family. Hex1 subfamily. As to quaternary structure, forms oligomers. Self-assembles into hexagonal rods.

The protein localises to the cell septum. Functionally, major component of Woronin bodies, fungal-specific organelles that occlude septal pores in order to separate intact from damaged compartments. Hex-1 binds directly or indirectly to the Woronin body tether that in turn is anchored at the rim of the septal pore. The polypeptide is Woronin body major protein (Neurospora crassa (strain ATCC 24698 / 74-OR23-1A / CBS 708.71 / DSM 1257 / FGSC 987)).